The following is a 256-amino-acid chain: ATP synthase peripheral stalk subunit b, mitochondrial (256 aa).

A mitochondrion-targeting transit peptide spans 1 to 42 (MLSRVVLSAAATAAPSLKNAAFLGPGVLQATRTFHTGQPHLV). At Lys131 the chain carries N6-succinyllysine. N6-acetyllysine is present on residues Lys139, Lys154, Lys162, Lys221, Lys233, and Lys244.

This sequence belongs to the eukaryotic ATPase B chain family. Component of the ATP synthase complex composed at least of ATP5F1A/subunit alpha, ATP5F1B/subunit beta, ATP5MC1/subunit c (homooctomer), MT-ATP6/subunit a, MT-ATP8/subunit 8, ATP5ME/subunit e, ATP5MF/subunit f, ATP5MG/subunit g, ATP5MK/subunit k, ATP5MJ/subunit j, ATP5F1C/subunit gamma, ATP5F1D/subunit delta, ATP5F1E/subunit epsilon, ATP5PF/subunit F6, ATP5PB/subunit b, ATP5PD/subunit d, ATP5PO/subunit OSCP. ATP synthase complex consists of a soluble F(1) head domain (subunits alpha(3) and beta(3)) - the catalytic core - and a membrane F(0) domain - the membrane proton channel (subunits c, a, 8, e, f, g, k and j). These two domains are linked by a central stalk (subunits gamma, delta, and epsilon) rotating inside the F1 region and a stationary peripheral stalk (subunits F6, b, d, and OSCP).

The protein resides in the mitochondrion. Its subcellular location is the mitochondrion inner membrane. In terms of biological role, subunit b, of the mitochondrial membrane ATP synthase complex (F(1)F(0) ATP synthase or Complex V) that produces ATP from ADP in the presence of a proton gradient across the membrane which is generated by electron transport complexes of the respiratory chain. ATP synthase complex consist of a soluble F(1) head domain - the catalytic core - and a membrane F(1) domain - the membrane proton channel. These two domains are linked by a central stalk rotating inside the F(1) region and a stationary peripheral stalk. During catalysis, ATP synthesis in the catalytic domain of F(1) is coupled via a rotary mechanism of the central stalk subunits to proton translocation. In vivo, can only synthesize ATP although its ATP hydrolase activity can be activated artificially in vitro. Part of the complex F(0) domain. Part of the complex F(0) domain and the peripheric stalk, which acts as a stator to hold the catalytic alpha(3)beta(3) subcomplex and subunit a/ATP6 static relative to the rotary elements. The chain is ATP synthase peripheral stalk subunit b, mitochondrial from Homo sapiens (Human).